Reading from the N-terminus, the 635-residue chain is MIQITLPDNSRREFPGPVSVAEVAQSIGPGLAKMTVAGKVDGKLVDASDVIDHDARLQIITPRDDEGLEIIRHSTAHLVGHAVKQLYPTAKMVIGPVIEEGFYYDISYERPFTPEDMAAIEARMRELIAQDYDVVKKMTPRAEVIEVFKSRGEDYKLRLVEDMPDEQAMGLYYHQEYVDMCRGPHVPNTRFLKVFKLTKLAGAYWRGDAKNEQLQRIYGTAWADKKQLDQYIQRIEEAEKRDHRKLGKELDLFHIDEVAPGVVFWHPKGWALWQAVEQYMRGIYRDTGYWEVKGPQILDKSLWEKTGHWQNYRDNMFTTESEKREYALKPMNCPGHVLIFKSDLRSYRDLPLRYGEFGQCHRNEPSGALHGIMRVRGFTQDDGHIFCTEDQILEECVAYTAQLQKVYADFGFTEILYKVATRPDNRVGSDELWDKAEHAVMEALRRSGVDFIISPGDGAFYGPKIEYTLKDALGRQWQCGTMQVDFNTAERLGGEYVTETSGRAHPVMLHRAIVGSLERFIGMLIEHHAGALPAWLAPVQVAVLNISEGQADYAASVAKTLQNQGLRVQLDLHNEKITYKIRKHSLQKLPYILVVGDKEREAGAVAVRARGNQDLGAMSLESFVQRLVQDVADKR.

One can recognise a TGS domain in the interval 1-61; sequence MIQITLPDNS…DHDARLQIIT (61 aa). Positions 242–533 are catalytic; sequence DHRKLGKELD…LIEHHAGALP (292 aa). Positions 333, 384, and 510 each coordinate Zn(2+).

It belongs to the class-II aminoacyl-tRNA synthetase family. In terms of assembly, homodimer. The cofactor is Zn(2+).

It localises to the cytoplasm. The catalysed reaction is tRNA(Thr) + L-threonine + ATP = L-threonyl-tRNA(Thr) + AMP + diphosphate + H(+). Catalyzes the attachment of threonine to tRNA(Thr) in a two-step reaction: L-threonine is first activated by ATP to form Thr-AMP and then transferred to the acceptor end of tRNA(Thr). Also edits incorrectly charged L-seryl-tRNA(Thr). In Variovorax paradoxus (strain S110), this protein is Threonine--tRNA ligase.